Reading from the N-terminus, the 570-residue chain is Coiled-coil domain-containing protein 22 homolog (570 aa).

2 disordered regions span residues 110–129 and 234–280; these read RQSE…REQL and LTST…PLEL. Residues 248–257 show a composition bias toward polar residues; that stretch reads TSPTQTSTTA. Over residues 265–276 the composition is skewed to low complexity; it reads SSEATATSTTTT. Coiled-coil stretches lie at residues 308 to 471 and 529 to 570; these read ELKI…LQRQ and GEKL…ITVG.

The protein belongs to the CCDC22 family.

The chain is Coiled-coil domain-containing protein 22 homolog from Drosophila willistoni (Fruit fly).